A 602-amino-acid chain; its full sequence is Alpha-glucosides permease MPH3 (602 aa).

The Cytoplasmic portion of the chain corresponds to Met1–Thr106. Residues Thr107–Phe127 form a helical membrane-spanning segment. Residues Gln128–Glu142 lie on the Extracellular side of the membrane. A helical membrane pass occupies residues Ile143–Leu163. Over Gln164–Thr178 the chain is Cytoplasmic. The helical transmembrane segment at Leu179 to Leu199 threads the bilayer. Gly200 is a topological domain (extracellular). Residues Met201–Val221 traverse the membrane as a helical segment. Residues Ser222–Tyr234 lie on the Cytoplasmic side of the membrane. Residues Tyr235–Met255 traverse the membrane as a helical segment. Topologically, residues Lys256–Lys270 are extracellular. The chain crosses the membrane as a helical span at residues Leu271–Pro291. Over Glu292–Arg363 the chain is Cytoplasmic. Residues Ile364 to Thr384 traverse the membrane as a helical segment. The Extracellular portion of the chain corresponds to Tyr385–Ser397. The chain crosses the membrane as a helical span at residues Phe398–Ala418. Residues Ser419–Asp426 are Cytoplasmic-facing. Residues Leu427–Cys447 traverse the membrane as a helical segment. At Ser448–Ser459 the chain is on the extracellular side. A helical transmembrane segment spans residues Leu460–Val480. Topologically, residues Ser481–Thr492 are cytoplasmic. Residues Ile493–Tyr513 form a helical membrane-spanning segment. Topologically, residues Gln514–Lys525 are extracellular. The helical transmembrane segment at Ser526–Pro546 threads the bilayer. The Cytoplasmic portion of the chain corresponds to Glu547–Glu602.

Belongs to the major facilitator superfamily. Sugar transporter (TC 2.A.1.1) family.

It localises to the cell membrane. In terms of biological role, high-affinity uptake of maltose and maltotriose. Also transports alpha-methylglucoside, glucose and turanose but not melezitose or trehalose. The polypeptide is Alpha-glucosides permease MPH3 (MPH3) (Saccharomyces cerevisiae (strain YJM789) (Baker's yeast)).